The following is a 171-amino-acid chain: 3-hydroxyanthranilate 3,4-dioxygenase (171 aa).

Arg44 is a binding site for O2. The Fe cation site is built by His48, Glu54, and His92. Glu54 is a substrate binding site. The substrate site is built by Arg96 and Glu106. Cys121, Cys126, Cys160, and Cys163 together coordinate a divalent metal cation.

The protein belongs to the 3-HAO family. The cofactor is Fe(2+).

The protein localises to the cytoplasm. The catalysed reaction is 3-hydroxyanthranilate + O2 = (2Z,4Z)-2-amino-3-carboxymuconate 6-semialdehyde. It functions in the pathway cofactor biosynthesis; NAD(+) biosynthesis; quinolinate from L-kynurenine: step 3/3. Functionally, catalyzes the oxidative ring opening of 3-hydroxyanthranilate to 2-amino-3-carboxymuconate semialdehyde, which spontaneously cyclizes to quinolinate. This Yarrowia lipolytica (strain CLIB 122 / E 150) (Yeast) protein is 3-hydroxyanthranilate 3,4-dioxygenase.